A 423-amino-acid polypeptide reads, in one-letter code: 5-hydroxytryptamine receptor 1A (423 aa).

Residues 1 to 20 (MEGLSPGQGNNTTSSEGPFG) form a disordered region. Topologically, residues 1 to 38 (MEGLSPGQGNNTTSSEGPFGTRGNATGISDVTFSYQVI) are extracellular. Polar residues predominate over residues 7–16 (GQGNNTTSSE). N-linked (GlcNAc...) asparagine glycosylation is found at asparagine 10, asparagine 11, and asparagine 24. The chain crosses the membrane as a helical span at residues 39–59 (TSLLLGTLIFCAVLGNACVVA). At 60-73 (AIALERSLQNVANY) the chain is on the cytoplasmic side. Residues 74–98 (LIGSLAVTDLMVSVLVLPMAALYQV) form a helical membrane-spanning segment. The Extracellular segment spans residues 99 to 107 (LNKWTLGQV). The chain crosses the membrane as a helical span at residues 108 to 132 (TCDLFIALDVLCCTSSILHLCAIAL). Cysteine 109 and cysteine 187 are disulfide-bonded. Residues aspartate 116 and cysteine 120 each contribute to the serotonin site. Positions 133-135 (DRY) match the DRY motif; important for ligand-induced conformation changes motif. The Cytoplasmic portion of the chain corresponds to 133-152 (DRYWAITDPIDYVNKRTPRR). A helical transmembrane segment spans residues 153–174 (AAALISLTWLIGFLISIPPMLG). At 175–193 (WRTPEDRSDPDACTISKDH) the chain is on the extracellular side. A helical membrane pass occupies residues 194–216 (GYTIYSTFGAFYIPLLLMLVLYG). Topologically, residues 217–346 (RIFRAARFRI…LARERKTVKT (130 aa)) are cytoplasmic. The interval 235–277 (RKGADARSGVSPAPQPRKSVNGEPGGREWRQGPGSKAGGPLCT) is disordered. Lysine 345, threonine 346, and glycine 352 together coordinate 1D-myo-inositol 4-phosphate. A helical membrane pass occupies residues 347-370 (LGIIMGTFILCWLPFFIVALVLPF). At 371-378 (CESSCHMP) the chain is on the extracellular side. Residues 379–403 (TLLGAIINWLGYSNSLLNPVIYAYF) form a helical membrane-spanning segment. The NPxxY motif; important for ligand-induced conformation changes and signaling signature appears at 396-400 (NPVIY). Residues phenylalanine 403, asparagine 404, and lysine 405 each contribute to the 1D-myo-inositol 4-phosphate site. Topologically, residues 404 to 423 (NKDFQNAFKKIVRCKFCRRR) are cytoplasmic.

It belongs to the G-protein coupled receptor 1 family. 5-hydroxytryptamine receptor subfamily. HTR1A sub-subfamily. In terms of assembly, heterodimer; heterodimerizes with GPER1. Interacts with YIF1B. Interacts with GPR39 and GALR1.

Its subcellular location is the cell membrane. It localises to the cell projection. The protein resides in the dendrite. G-protein coupled receptor activity is regulated by lipids: phosphatidylinositol 4-phosphate increases HTR1A-mediated activity. In terms of biological role, G-protein coupled receptor for 5-hydroxytryptamine (serotonin). Also functions as a receptor for various drugs and psychoactive substances. Ligand binding causes a conformation change that triggers signaling via guanine nucleotide-binding proteins (G proteins) and modulates the activity of downstream effectors, such as adenylate cyclase. HTR1A is coupled to G(i)/G(o) G alpha proteins and mediates inhibitory neurotransmission: signaling inhibits adenylate cyclase activity and activates a phosphatidylinositol-calcium second messenger system that regulates the release of Ca(2+) ions from intracellular stores. Beta-arrestin family members regulate signaling by mediating both receptor desensitization and resensitization processes. This is 5-hydroxytryptamine receptor 1A (HTR1A) from Vulpes vulpes (Red fox).